The following is a 150-amino-acid chain: Ribosomal RNA large subunit methyltransferase H (150 aa).

Residues Ile-71, Ala-100, and 118-123 contribute to the S-adenosyl-L-methionine site; that span reads LSEMTF.

It belongs to the RNA methyltransferase RlmH family. Homodimer.

The protein localises to the cytoplasm. It carries out the reaction pseudouridine(1915) in 23S rRNA + S-adenosyl-L-methionine = N(3)-methylpseudouridine(1915) in 23S rRNA + S-adenosyl-L-homocysteine + H(+). Specifically methylates the pseudouridine at position 1915 (m3Psi1915) in 23S rRNA. In Helicobacter acinonychis (strain Sheeba), this protein is Ribosomal RNA large subunit methyltransferase H.